The primary structure comprises 321 residues: PI-PLC X domain-containing protein 3 (321 aa).

One can recognise a PI-PLC X-box domain in the interval 22–197; the sequence is SIHSIPLTNL…DYQVLVFYHS (176 aa). Residues histidine 37 and histidine 114 contribute to the active site.

As to expression, widely expressed, with highest levels in brain, followed by heart atrium. Not detected in small intestine, nor stomach.

The protein resides in the cytoplasm. This is PI-PLC X domain-containing protein 3 (Plcxd3) from Mus musculus (Mouse).